Here is a 533-residue protein sequence, read N- to C-terminus: Glucomannan 4-beta-mannosyltransferase 9 (533 aa).

Residues 37 to 57 (IVPALRLGVYICLTMSVMLFV) traverse the membrane as a helical segment. Residue Asp-136 is part of the active site. The substrate site is built by Asp-195 and Asp-197. The active site involves Asp-289. Transmembrane regions (helical) follow at residues 368–388 (LVAH…TVLV), 404–426 (VITL…WILF), 483–503 (VLEL…AFFG), and 510–530 (YLFA…GTIV).

This sequence belongs to the glycosyltransferase 2 family. Plant cellulose synthase-like A subfamily. As to expression, expressed in cotyledons at the base of the hypocotyls, in root elongation zone, lateral root primordia, vascular system of young leaves, abscission zone of the pedicle,.

It is found in the golgi apparatus membrane. It carries out the reaction GDP-mannose + (glucomannan)n = GDP + (glucomannan)n+1.. Possesses glucomannan synthase and mannan synthase activities in vitro. Mannan synthase consists of a 4-beta-mannosyltransferase activity on mannan using GDP-mannose. The beta-1,4-mannan product is the backbone for galactomannan synthesis by galactomannan galactosyltransferase. Galactomannan is a noncellulosic polysaccharides of plant cell wall. Required for lateral root development. The chain is Glucomannan 4-beta-mannosyltransferase 9 from Arabidopsis thaliana (Mouse-ear cress).